A 304-amino-acid chain; its full sequence is Ribosomal RNA small subunit methyltransferase H (304 aa).

Residues 37 to 39 (GGH), Asp57, Phe79, Asp100, and His107 each bind S-adenosyl-L-methionine.

It belongs to the methyltransferase superfamily. RsmH family.

The protein localises to the cytoplasm. It carries out the reaction cytidine(1402) in 16S rRNA + S-adenosyl-L-methionine = N(4)-methylcytidine(1402) in 16S rRNA + S-adenosyl-L-homocysteine + H(+). Functionally, specifically methylates the N4 position of cytidine in position 1402 (C1402) of 16S rRNA. In Bacteroides fragilis (strain ATCC 25285 / DSM 2151 / CCUG 4856 / JCM 11019 / LMG 10263 / NCTC 9343 / Onslow / VPI 2553 / EN-2), this protein is Ribosomal RNA small subunit methyltransferase H.